The primary structure comprises 877 residues: Valine--tRNA ligase (877 aa).

Residues 46-56 (PYPTGSIHMGH) carry the 'HIGH' region motif. A 'KMSKS' region motif is present at residues 529 to 533 (KMSKS). K532 contacts ATP.

The protein belongs to the class-I aminoacyl-tRNA synthetase family. ValS type 2 subfamily.

It is found in the cytoplasm. It carries out the reaction tRNA(Val) + L-valine + ATP = L-valyl-tRNA(Val) + AMP + diphosphate. In terms of biological role, catalyzes the attachment of valine to tRNA(Val). As ValRS can inadvertently accommodate and process structurally similar amino acids such as threonine, to avoid such errors, it has a 'posttransfer' editing activity that hydrolyzes mischarged Thr-tRNA(Val) in a tRNA-dependent manner. The sequence is that of Valine--tRNA ligase from Methanothermobacter thermautotrophicus (strain ATCC 29096 / DSM 1053 / JCM 10044 / NBRC 100330 / Delta H) (Methanobacterium thermoautotrophicum).